We begin with the raw amino-acid sequence, 96 residues long: Putative pterin-4-alpha-carbinolamine dehydratase (96 aa).

This sequence belongs to the pterin-4-alpha-carbinolamine dehydratase family.

It catalyses the reaction (4aS,6R)-4a-hydroxy-L-erythro-5,6,7,8-tetrahydrobiopterin = (6R)-L-erythro-6,7-dihydrobiopterin + H2O. In Prochlorococcus marinus (strain MIT 9301), this protein is Putative pterin-4-alpha-carbinolamine dehydratase.